We begin with the raw amino-acid sequence, 258 residues long: Spectinomycin 9-adenylyltransferase (258 aa).

It catalyses the reaction spectinomycin + ATP = 9-O-adenylylspectinomycin + diphosphate. Functionally, mediates bacterial resistance to spectinomycin, is probably a spectinomycin 9-adenylyltransferase. This Campylobacter jejuni protein is Spectinomycin 9-adenylyltransferase.